A 95-amino-acid polypeptide reads, in one-letter code: Co-chaperonin GroES (95 aa).

The protein belongs to the GroES chaperonin family. Heptamer of 7 subunits arranged in a ring. Interacts with the chaperonin GroEL.

The protein resides in the cytoplasm. Functionally, together with the chaperonin GroEL, plays an essential role in assisting protein folding. The GroEL-GroES system forms a nano-cage that allows encapsulation of the non-native substrate proteins and provides a physical environment optimized to promote and accelerate protein folding. GroES binds to the apical surface of the GroEL ring, thereby capping the opening of the GroEL channel. This Rhodobacter capsulatus (Rhodopseudomonas capsulata) protein is Co-chaperonin GroES.